A 338-amino-acid chain; its full sequence is Large ribosomal subunit protein uL10 (338 aa).

The disordered stretch occupies residues 295-338; sequence EVPTIQPTTPPEKKEEEEKKEEEEEEAETVSEEELAEGLGALFG. The segment covering 312–330 has biased composition (acidic residues); it reads EKKEEEEEEAETVSEEELA.

The protein belongs to the universal ribosomal protein uL10 family. Part of the 50S ribosomal subunit. Forms part of the ribosomal stalk which helps the ribosome interact with GTP-bound translation factors. Forms a heptameric L10(L12)2(L12)2(L12)2 complex, where L10 forms an elongated spine to which the L12 dimers bind in a sequential fashion.

Its function is as follows. Forms part of the ribosomal stalk, playing a central role in the interaction of the ribosome with GTP-bound translation factors. The sequence is that of Large ribosomal subunit protein uL10 from Staphylothermus marinus (strain ATCC 43588 / DSM 3639 / JCM 9404 / F1).